Consider the following 151-residue polypeptide: Ribosome maturation factor RimP (151 aa).

Belongs to the RimP family.

The protein resides in the cytoplasm. Functionally, required for maturation of 30S ribosomal subunits. The chain is Ribosome maturation factor RimP from Alcanivorax borkumensis (strain ATCC 700651 / DSM 11573 / NCIMB 13689 / SK2).